Here is a 197-residue protein sequence, read N- to C-terminus: Phosphoheptose isomerase (197 aa).

The 163-residue stretch at 34-196 (MVQCLLGGNK…DRTLFPQDEQ (163 aa)) folds into the SIS domain. 49–51 (NGG) serves as a coordination point for substrate. Zn(2+) is bound by residues H58 and E62. Residues E62, 91–92 (ND), 117–119 (STS), S122, and Q172 each bind substrate. Residues Q172 and H180 each coordinate Zn(2+).

The protein belongs to the SIS family. GmhA subfamily. In terms of assembly, homotetramer. Requires Zn(2+) as cofactor.

The protein localises to the cytoplasm. The enzyme catalyses 2 D-sedoheptulose 7-phosphate = D-glycero-alpha-D-manno-heptose 7-phosphate + D-glycero-beta-D-manno-heptose 7-phosphate. It functions in the pathway carbohydrate biosynthesis; D-glycero-D-manno-heptose 7-phosphate biosynthesis; D-glycero-alpha-D-manno-heptose 7-phosphate and D-glycero-beta-D-manno-heptose 7-phosphate from sedoheptulose 7-phosphate: step 1/1. In terms of biological role, catalyzes the isomerization of sedoheptulose 7-phosphate in D-glycero-D-manno-heptose 7-phosphate. The polypeptide is Phosphoheptose isomerase (Shewanella oneidensis (strain ATCC 700550 / JCM 31522 / CIP 106686 / LMG 19005 / NCIMB 14063 / MR-1)).